The chain runs to 401 residues: Phosphoglycerate kinase (401 aa).

Substrate-binding positions include 23–25 (DLN), Arg38, 61–64 (HFGR), Arg120, and Arg153. Residues Lys203, Glu325, and 355 to 358 (GGDT) each bind ATP.

The protein belongs to the phosphoglycerate kinase family. As to quaternary structure, monomer.

The protein localises to the cytoplasm. The enzyme catalyses (2R)-3-phosphoglycerate + ATP = (2R)-3-phospho-glyceroyl phosphate + ADP. The protein operates within carbohydrate degradation; glycolysis; pyruvate from D-glyceraldehyde 3-phosphate: step 2/5. This is Phosphoglycerate kinase from Rhizobium johnstonii (strain DSM 114642 / LMG 32736 / 3841) (Rhizobium leguminosarum bv. viciae).